A 450-amino-acid polypeptide reads, in one-letter code: Guanine deaminase (450 aa).

Residues His-88 and His-90 each coordinate Zn(2+). Residues 90–93 (HAPQ), 218–219 (RF), 245–248 (HLSE), and Asp-335 contribute to the substrate site. Residues His-245 and Asp-335 each coordinate Zn(2+).

It belongs to the metallo-dependent hydrolases superfamily. ATZ/TRZ family. Zn(2+) serves as cofactor.

It carries out the reaction guanine + H2O + H(+) = xanthine + NH4(+). Its pathway is purine metabolism; guanine degradation; xanthine from guanine: step 1/1. Catalyzes the hydrolytic deamination of guanine, producing xanthine and ammonia. The chain is Guanine deaminase (guaD) from Dictyostelium discoideum (Social amoeba).